Reading from the N-terminus, the 739-residue chain is Trehalose phosphorylase (739 aa).

Positions 1–26 (MSTPHHQFESKSSTAIRRRLSSSVSS) are excised as a propeptide. The disordered stretch occupies residues 1–28 (MSTPHHQFESKSSTAIRRRLSSSVSSKQ).

Belongs to the glycosyltransferase group 1 family. Glycosyltransferase 4 subfamily. Homodimer.

The enzyme catalyses alpha,alpha-trehalose + phosphate = alpha-D-glucose + alpha-D-glucose 1-phosphate. Functionally, reversibly catalyzes the synthesis and degradation of trehalose from glucose and alpha-D-glucose 1-phosphate. The equilibrium lies in the direction of trehalose synthesis. The polypeptide is Trehalose phosphorylase (Pleurotus pulmonarius (Indian oyster mushroom)).